The primary structure comprises 104 residues: Putative arsenate reductase (104 aa).

C12 is a catalytic residue.

The protein belongs to the ArsC family.

It catalyses the reaction [glutaredoxin]-dithiol + arsenate + glutathione + H(+) = glutathionyl-S-S-[glutaredoxin] + arsenite + H2O. Reduction of arsenate [As(V)] to arsenite [As(III)]. This protein expands the substrate specificity of ArsAB pump which can extrude arsenite and antimonite to allow for arsenate pumping and resistance. In Escherichia coli (strain K12), this protein is Putative arsenate reductase (yfjU).